The following is a 187-amino-acid chain: Putative manganese efflux pump MntP (187 aa).

The next 6 helical transmembrane spans lie at 3-23 (LSATLLLAFGMSMDAFAASIG), 41-61 (LIFGVIEAITPLVGWLLGLLA), 62-82 (TQFVLTWNHWIAFVLLVFLGG), 106-128 (LLVTTAFATSLDAMAVGVGLAFL), 142-162 (ATLIMSTLGMMVGRFIGPLLG), and 167-187 (ILGGVVLIGIGCQILWSHFAG).

It belongs to the MntP (TC 9.B.29) family.

It localises to the cell inner membrane. Probably functions as a manganese efflux pump. In Cronobacter sakazakii (strain ATCC BAA-894) (Enterobacter sakazakii), this protein is Putative manganese efflux pump MntP.